The primary structure comprises 806 residues: Mitogen-activated protein kinase 7 (806 aa).

The interval 1-23 (MAEPLKEEDGEDGSGEPPGRVKA) is disordered. Ala2 carries the N-acetylalanine modification. The segment at 2-77 (AEPLKEEDGE…VVSSARRRLT (76 aa)) is required for cytoplasmic targeting. One can recognise a Protein kinase domain in the interval 55–347 (YEIIETIGNG…AAAALRHPFL (293 aa)). ATP contacts are provided by residues 61-69 (IGNGAYGVV) and Lys84. The interval 78–139 (GQQVAIKKIP…FRSVYVVLDL (62 aa)) is required for binding to MAP2K5. The interval 140 to 406 (MESDLHQIIH…QQIRFQPSLQ (267 aa)) is necessary for oligomerization. The Proton acceptor role is filled by Asp182. The short motif at 219-221 (TEY) is the TXY element. A may not be required for kinase activity; required to stimulate MEF2C activity region spans residues 407–806 (PVASEPVCPD…LSDLPDLQEP (400 aa)). Disordered stretches follow at residues 424–475 (APSG…SDNT) and 488–727 (RSRL…PKGS). The segment covering 433 to 443 (SPPPALPPCSG) has biased composition (pro residues). Basic and acidic residues-rich tracts occupy residues 502-519 (PEPR…EREE), 527-544 (RAKE…KERG), and 563-573 (DNDRSLLERWT). Positions 505-539 (RKPVTAQERQREREEKRRRRQERAKEREKRRQERE) match the Nuclear localization signal motif. Composition is skewed to pro residues over residues 578 to 592 (PPVP…PTPK) and 627 to 643 (VCPP…PVPA). The span at 647-660 (TAPSTSLLASQSLV) shows a compositional bias: polar residues. The span at 678–689 (PSGPPPPDPGLT) shows a compositional bias: pro residues. A compositionally biased stretch (polar residues) spans 693–710 (STSESPDVNLVTQQLSKS). The residue at position 710 (Ser710) is a Phosphoserine. Thr723 is subject to Phosphothreonine.

The protein belongs to the protein kinase superfamily. CMGC Ser/Thr protein kinase family. MAP kinase subfamily. Interacts with MAP2K5. Forms oligomers. Interacts with MEF2A, MEF2C and MEF2D; the interaction phosphorylates the MEF2s and enhances transcriptional activity of MEF2A, MEF2C but not MEF2D. Interacts with SGK1. Interacts with PML. Interacts (via N-terminal half) with HSP90AB1-CDC37 chaperone complex in resting cells; the interaction is MAP2K5-independent and prevents MAPK7 from ubiquitination and proteasomal degradation. Interacts with STUB1/CHIP; the interaction is enhanced in the presence of IGF1 or MAP2K5 and promotes STUB1/CHIP E3 ligase activity. Requires Mg(2+) as cofactor. In terms of processing, dually phosphorylated on Thr-219 and Tyr-221, which activates the enzyme.

Its subcellular location is the cytoplasm. The protein resides in the nucleus. It is found in the PML body. The catalysed reaction is L-seryl-[protein] + ATP = O-phospho-L-seryl-[protein] + ADP + H(+). The enzyme catalyses L-threonyl-[protein] + ATP = O-phospho-L-threonyl-[protein] + ADP + H(+). Its activity is regulated as follows. Activated by tyrosine and threonine phosphorylation. Activated in response to hyperosmolarity, hydrogen peroxide, and epidermal growth factor (EGF). Functionally, plays a role in various cellular processes such as proliferation, differentiation and cell survival. The upstream activator of MAPK7 is the MAPK kinase MAP2K5. Upon activation, it translocates to the nucleus and phosphorylates various downstream targets including MEF2C. EGF activates MAPK7 through a Ras-independent and MAP2K5-dependent pathway. As part of the MAPK/ERK signaling pathway, acts as a negative regulator of apoptosis in cardiomyocytes via interaction with STUB1/CHIP and promotion of STUB1-mediated ubiquitination and degradation of ICER-type isoforms of CREM. May have a role in muscle cell differentiation. May be important for endothelial function and maintenance of blood vessel integrity. MAP2K5 and MAPK7 interact specifically with one another and not with MEK1/ERK1 or MEK2/ERK2 pathways. Phosphorylates SGK1 at Ser-78 and this is required for growth factor-induced cell cycle progression. Involved in the regulation of p53/TP53 by disrupting the PML-MDM2 interaction. This chain is Mitogen-activated protein kinase 7 (Mapk7), found in Rattus norvegicus (Rat).